A 446-amino-acid polypeptide reads, in one-letter code: Neuropeptide Y receptor type 5 (446 aa).

Residues 1–42 (MGSEIPDYYNKTLASENNTVATRNSGFPVWEDYKGSVDDLQY) are Extracellular-facing. Residues Asn-10 and Asn-17 are each glycosylated (N-linked (GlcNAc...) asparagine). Residues 43-63 (FLIGLYTFVSLLGFMGNLLIL) traverse the membrane as a helical segment. The Cytoplasmic segment spans residues 64–77 (MAVMRKRNQKTTVN). A helical transmembrane segment spans residues 78-98 (FLIGNLAFSDILVVLFCSPFT). At 99 to 117 (LTSVLLDQWMFGKVMCHIM) the chain is on the extracellular side. A disulfide bond links Cys-114 and Cys-198. A helical transmembrane segment spans residues 118–138 (PFLQCVTVLVSTLILISIAIV). Residues 139–156 (RYHMIKHPVSNNLTANHG) are Cytoplasmic-facing. The chain crosses the membrane as a helical span at residues 157–177 (YFLIATVWTLGLAICSPLPVF). Residues 178–208 (HSLVELQESFGSAWLSSRYLCVESWPSDSYR) are Extracellular-facing. Residues 209 to 229 (IAFTISLLLVQYILPLVCLTV) traverse the membrane as a helical segment. Over 230–369 (SHTSVCRTIS…RKRSRSVFYR (140 aa)) the chain is Cytoplasmic. The segment at 297–325 (RPAPAGPALESREGRPPGKVGSMQSQPPP) is disordered. A helical membrane pass occupies residues 370–390 (LTVLILVFAVSWMPLHLFHVV). At 391–407 (TDFNDNLISNRHFKLVY) the chain is on the extracellular side. The chain crosses the membrane as a helical span at residues 408–428 (CICHLLGMMSCCLNPILYGFL). Over 429–446 (NNGIKADLMSLIHCLHVS) the chain is Cytoplasmic. Residue Cys-442 is the site of S-palmitoyl cysteine attachment.

It belongs to the G-protein coupled receptor 1 family.

It is found in the cell membrane. In terms of biological role, receptor for neuropeptide Y and peptide YY. The activity of this receptor is mediated by G proteins that inhibit adenylate cyclase activity. Seems to be associated with food intake. Could be involved in feeding disorders. In Sus scrofa (Pig), this protein is Neuropeptide Y receptor type 5 (NPY5R).